The chain runs to 103 residues: Cell division protein FtsB (103 aa).

The Cytoplasmic segment spans residues 1 to 3 (MGK). A helical membrane pass occupies residues 4-21 (LTLLLLAILVWLQYSLWF). At 22–103 (GKNGIHDYTR…RAQSAGQNNR (82 aa)) the chain is on the periplasmic side. Residues 31–71 (RVNDDVAAQQATNAKLKARNDQLFAEIDDLNGGQEALEERA) are a coiled coil.

This sequence belongs to the FtsB family. In terms of assembly, part of a complex composed of FtsB, FtsL and FtsQ.

It localises to the cell inner membrane. In terms of biological role, essential cell division protein. May link together the upstream cell division proteins, which are predominantly cytoplasmic, with the downstream cell division proteins, which are predominantly periplasmic. This is Cell division protein FtsB from Escherichia coli O157:H7.